Reading from the N-terminus, the 89-residue chain is Small ribosomal subunit protein uS15 (89 aa).

This sequence belongs to the universal ribosomal protein uS15 family. As to quaternary structure, part of the 30S ribosomal subunit. Forms a bridge to the 50S subunit in the 70S ribosome, contacting the 23S rRNA.

Functionally, one of the primary rRNA binding proteins, it binds directly to 16S rRNA where it helps nucleate assembly of the platform of the 30S subunit by binding and bridging several RNA helices of the 16S rRNA. Its function is as follows. Forms an intersubunit bridge (bridge B4) with the 23S rRNA of the 50S subunit in the ribosome. This Chlorobium luteolum (strain DSM 273 / BCRC 81028 / 2530) (Pelodictyon luteolum) protein is Small ribosomal subunit protein uS15.